An 83-amino-acid chain; its full sequence is U25-theraphotoxin-Cg1a (83 aa).

A signal peptide spans Met1 to Ala23. The propeptide occupies Gln24–Arg48. Cystine bridges form between Cys50–Cys66, Cys57–Cys71, and Cys65–Cys81.

This sequence belongs to the neurotoxin 07 (Beta/delta-agtx) family. 03 (aga-4) subfamily. JZTX sub-subfamily. Expressed by the venom gland.

It localises to the secreted. Functionally, inhibits TTX-sensitive sodium currents in rat dorsal root ganglion (DRG) neurons. The protein is U25-theraphotoxin-Cg1a of Chilobrachys guangxiensis (Chinese earth tiger tarantula).